The sequence spans 973 residues: DNA repair protein rhp26 (973 aa).

Positions 35–107 form a coiled coil; sequence ESREIEKKRL…DIKRRLNNED (73 aa). The interval 230-251 is disordered; the sequence is RDQASASENNKDRGEFEGKDEW. Residues 238-251 show a composition bias toward basic and acidic residues; the sequence is NNKDRGEFEGKDEW. Positions 289–490 constitute a Helicase ATP-binding domain; it reads WELYCQEAGG…WNLFDFVFPG (202 aa). 302-309 serves as a coordination point for ATP; the sequence is DEMGLGKT. Residues 367–386 are disordered; sequence SREKRQYESDASESEAEESK. The DEAH box motif lies at 441–444; that stretch reads DEGH. The region spanning 629-789 is the Helicase C-terminal domain; sequence VIRALLTLWK…RRFFKMTDLH (161 aa). Disordered regions lie at residues 803-846, 863-882, and 930-973; these read ETGS…KGKK, KYKP…STLG, and AVSS…KQRR. Residues 834 to 846 are compositionally biased toward basic residues; that stretch reads DRKKHKIHDKGKK. Composition is skewed to polar residues over residues 868–882 and 947–965; these read QESN…STLG and STNV…SSTL.

The protein localises to the cytoplasm. The protein resides in the nucleus. Functionally, involved in transcription-coupled repair (TCR). In Schizosaccharomyces pombe (strain 972 / ATCC 24843) (Fission yeast), this protein is DNA repair protein rhp26 (rhp26).